Reading from the N-terminus, the 932-residue chain is Beta-mannosidase A (932 aa).

Positions 1 to 21 (MRIREQTILALLSPGLPPVTG) are cleaved as a signal peptide. 5 N-linked (GlcNAc...) asparagine glycosylation sites follow: Asn40, Asn248, Asn283, Asn317, and Asn348. Glu480 acts as the Proton donor in catalysis. N-linked (GlcNAc...) asparagine glycans are attached at residues Asn538, Asn609, Asn632, Asn659, Asn739, Asn762, and Asn791.

The protein belongs to the glycosyl hydrolase 2 family. Beta-mannosidase A subfamily. Homodimer.

The protein localises to the secreted. The catalysed reaction is Hydrolysis of terminal, non-reducing beta-D-mannose residues in beta-D-mannosides.. Its pathway is glycan metabolism; N-glycan degradation. Exoglycosidase that cleaves the single beta-linked mannose residue from the non-reducing end of beta-mannosidic oligosaccharides of various complexity and length. Involved in the degradation of polymeric mannan and galactomannan. The protein is Beta-mannosidase A (mndA) of Aspergillus clavatus (strain ATCC 1007 / CBS 513.65 / DSM 816 / NCTC 3887 / NRRL 1 / QM 1276 / 107).